Consider the following 306-residue polypeptide: HORMA domain-containing protein 2 (306 aa).

Positions 29 to 232 (HESLVVVKKL…SGFHSMKVKV (204 aa)) constitute an HORMA domain. Ser271 carries the phosphoserine modification.

In terms of assembly, interacts with HORMAD1. Phosphorylated in a SPO11-dependent manner. As to expression, specifically expressed in meiotic germ cells.

It localises to the nucleus. Its subcellular location is the chromosome. Essential for synapsis surveillance during meiotic prophase via the recruitment of ATR activity. Plays a key role in the male mid-pachytene checkpoint and the female meiotic prophase checkpoint: required for efficient build-up of ATR activity on unsynapsed chromosome regions, a process believed to form the basis of meiotic silencing of unsynapsed chromatin (MSUC) and meiotic prophase quality control in both sexes. Required for the DNA double-strand break-independent, BRCA1-dependent activation of ATR on the sex chromosomes that is essential for normal sex body formation. In Mus musculus (Mouse), this protein is HORMA domain-containing protein 2 (Hormad2).